We begin with the raw amino-acid sequence, 487 residues long: MTFQSLILGPALPEILLAVLGLVLLMVGVFRKTDSTGLVGLLAVYGLLMALAVVGLGAAPETPQLAFGGLFIDDGFARYAKALTLLGAVLTLLLSMVWLKRENEGRFEFPILVLFATIGMMMMISANDLIALYMGLELQSLALYVIAAYQRDNLKSTEAGLKYFVLGALASGLLLYGMSLVYGFAGTTRFDGLAQVAAAEGGISTGLLIGIVFIIAGLAFKVSAVPFHMWAPDVYEGAPTPVTAFFAVAPKIAALTLFARVMMGPFAAYADQWQQVIILISILSMLLGGFAAIVQTNIKRLMAYSSIGHVGYALIGIAAGTTEGVRGVLVYLAIYLFMNVGTFTVILAMRQKGRAVEGINDLAGLSKQHPMMAAAMAVFMFSMAGVPPLAGFFGKFYVFMAAVNSGLFALAVIGVLSSVVAAFYYLRIIKLMYFDEATEPLDALSGTTMKVILIGTAAVVALFFLAPSVVVDGAQAAAEALTFASAR.

The next 13 helical transmembrane spans lie at 7-27 (ILGP…LLMV), 38-58 (LVGL…GLGA), 79-99 (YAKA…MVWL), 111-131 (ILVL…DLIA), 164-184 (FVLG…VYGF), 207-227 (LLIG…AVPF), 238-258 (APTP…LTLF), 276-296 (VIIL…IVQT), 301-321 (LMAY…AAGT), 328-348 (VLVY…VILA), 373-393 (AAAM…AGFF), 406-426 (GLFA…FYYL), and 451-471 (VILI…SVVV).

The protein belongs to the complex I subunit 2 family. NDH-1 is composed of 14 different subunits. Subunits NuoA, H, J, K, L, M, N constitute the membrane sector of the complex.

It localises to the cell inner membrane. The enzyme catalyses a quinone + NADH + 5 H(+)(in) = a quinol + NAD(+) + 4 H(+)(out). Its function is as follows. NDH-1 shuttles electrons from NADH, via FMN and iron-sulfur (Fe-S) centers, to quinones in the respiratory chain. The immediate electron acceptor for the enzyme in this species is believed to be ubiquinone. Couples the redox reaction to proton translocation (for every two electrons transferred, four hydrogen ions are translocated across the cytoplasmic membrane), and thus conserves the redox energy in a proton gradient. This Rhodospirillum rubrum (strain ATCC 11170 / ATH 1.1.1 / DSM 467 / LMG 4362 / NCIMB 8255 / S1) protein is NADH-quinone oxidoreductase subunit N.